Reading from the N-terminus, the 574-residue chain is Glycine--tRNA ligase (574 aa).

Residues Arg-96 and Glu-162 each contribute to the substrate site. ATP-binding positions include 194–196 (RNE), 204–209 (IRLREF), 327–328 (EC), and 450–453 (GIDR). 209 to 213 (FTQAE) contacts substrate. 446 to 450 (EPSYG) is a substrate binding site.

The protein belongs to the class-II aminoacyl-tRNA synthetase family.

It localises to the cytoplasm. The catalysed reaction is tRNA(Gly) + glycine + ATP = glycyl-tRNA(Gly) + AMP + diphosphate. In terms of biological role, catalyzes the attachment of glycine to tRNA(Gly). The sequence is that of Glycine--tRNA ligase from Methanococcus maripaludis (strain DSM 14266 / JCM 13030 / NBRC 101832 / S2 / LL).